Consider the following 357-residue polypeptide: Putative DENN domain-containing protein 10 B (357 aa).

In terms of domain architecture, uDENN spans 1–140; the sequence is MAAAELADTQ…TKGICQSEEN (140 aa). Positions 159-299 constitute a cDENN domain; it reads IKDIVSQFGM…PEKSESQVIQ (141 aa). A dDENN domain is found at 301 to 357; it reads IALKTREIFTNLAPFSEVSADGEKRVLNLEALKQKRFPPATENFLYHLAAAEQMLKI.

The protein belongs to the DENND10 family.

The protein resides in the late endosome. In terms of biological role, may be a guanine nucleotide exchange factor (GEF). In Homo sapiens (Human), this protein is Putative DENN domain-containing protein 10 B.